Here is a 683-residue protein sequence, read N- to C-terminus: Hexamerin 70b (683 aa).

An N-terminal signal peptide occupies residues 1–21; it reads MIVIMKAGFLFLASLCLLVQA. Residues 32–153 enclose the Hemocyanin N-terminal domain; the sequence is VTRQKNIYEL…VAVIHRPDTK (122 aa). A Hemocyanin middle domain is found at 159–428; the sequence is PMYEVMPHLY…SIYKTILDYY (270 aa). Asn-203 is a glycosylation site (N-linked (GlcNAc...) asparagine). Residues 437–673 form the Hemocyanin C-terminal domain; sequence KYTTEELNFP…IHVKEVLVHH (237 aa).

It belongs to the hemocyanin/hexamerin family. As to quaternary structure, probable homohexamer. In terms of tissue distribution, expressed in the fat body and secreted into the hemolymph (at protein level). Present in trophocytes and oenocytes of the fat body (at protein level).

The protein localises to the secreted. It is found in the nucleus. The protein resides in the cytoplasm. It localises to the cytoplasmic granule. In terms of biological role, storage protein that may function as a nutrient supply to compensate for lack of dietary proteins during metamorphosis and egg production. The sequence is that of Hexamerin 70b from Apis mellifera (Honeybee).